The chain runs to 935 residues: Protein HIRA (935 aa).

WD repeat units lie at residues 14 to 58, 72 to 111, 131 to 170, 174 to 213, 222 to 261, 277 to 320, and 325 to 362; these read HDTG…DKKK, ESQS…NSMG, GHSM…DRIT, DIQL…CVKS, IEET…QTWK, RAMP…KPLF, and IFNH…IGEM. Residues 431–556 are disordered; that stretch reads SSDIQLTKSM…RNKKRKVPAT (126 aa). Over residues 439–468 the composition is skewed to basic and acidic residues; it reads SMEDNSKENESKNSEKTMMEERNKQIDVRK. Residues 480-492 show a composition bias toward polar residues; it reads GTTTADPMTSLSS. Positions 520 to 542 are enriched in acidic residues; the sequence is DLEDSSDSDDDDEEEEEDMEISD.

It belongs to the WD repeat HIR1 family.

The protein localises to the nucleus. Its function is as follows. Required for replication-independent chromatin assembly and for the periodic repression of histone gene transcription during the cell cycle. This is Protein HIRA from Caenorhabditis elegans.